The following is a 474-amino-acid chain: PRAME family member 8 (474 aa).

Residues 97-122 (QSKLQVLDLRNVDENFCDIFSGATAS) form an LRR 1; degenerate repeat. The stretch at 177–201 (HVCCKELQVFGMPIHSIIEVLNMVE) is one LRR 2; degenerate repeat. An LRR 3; degenerate repeat occupies 202 to 228 (LDCIQEVEVCCPWELSTLVKFAPYLGQ). The stretch at 229-264 (MRNLRKLVLFNIRASACIPPDNKGQFIARFTSQFLK) is one LRR 4; degenerate repeat. 5 LRR repeats span residues 265–290 (LDYF…LRCL), 291–322 (QASL…RQLK), 323–341 (ELDL…PLTG), 347–374 (VATL…VLSR), and 375–399 (CSQL…LLRH).

This sequence belongs to the PRAME family.

The protein is PRAME family member 8 of Homo sapiens (Human).